Here is a 933-residue protein sequence, read N- to C-terminus: MIERVKTTKLSEASGLPKTYDPVGTENRWQKAWEEKGAFKPDPSAPGDPFSVVIPPPNVTGSLHMGHAFNTALIDTVVRYKRLKGNNVLCLPGTDHASIAVQTILERQLKEEGKNRRDLGRASFLEKAWEWKEKSGGRIVDQLKRLGYSVDWSRERFTLDEGLSKAVSEAFVRLHEKGLIYRGEYLVNWCPASGSAVSDLEVEMKEVDGHLWHFRYPLVTSSVSSAKQISYLEVATTRPETMLGDVAVAVNPSDERYKDLIGEKLTLPLVGRTIPIIGDPHVDKDFGTGCVKVTPAHDPNDFEIGQRHDLPQITVMTKKGTMNHNAGQFEGLDRFEAREAVIDSLKEIGLLTKIEAYKHSVPFSDRGKVPVEPLLSTQWFVKMDPLSSSCSEFFEKGQPKFIPNRWSKVYRDWLTDIRDWCISRQLWWGHRIPAWFVISQTDNKVVNETPYIVARTEDEAKKLAREKYGDSVKIEQDEDVLDTWFSSGLWPFSTLGWPDETHPDFQRWYPTNTLVTGFDIIFFWVARMTMMAGVFTERMPFADVYIHGLVRDEQNRKMSKSAGNGIDPLLLIERYGTDALRFALVREVAGAGQDIRLDFDRKNQTSATVEASRNFANKLWNATRFALINLEDQDYENLESYDSSKLQLSDRWILSRLARVNHETANRYENYALGEAAKGLYEFAWNDFCDWYLELIKRRLNNSENLSSDELLDRKIAKSVLYKVLSDLLIMLHPLMPHLTEELWHGLTGLDEDQFLALQPWPKSNEQDLNLDLESSFSDLFASIRLIRNLRAVAGLKPSQKVPVMLVSGKEVLQKTLTTSINDIAVLTKAKEVQILSPEQAKSLPSMKALAGVSGELEVVLPIEGLIDIASLRSRLEKDLNKAQKEIESLSGRLANKNFVDKAPKDVVEECRANLTESEAQVRLVKERLMGLD.

A disordered region spans residues 1 to 24 (MIERVKTTKLSEASGLPKTYDPVG). Residues 57–67 (PNVTGSLHMGH) carry the 'HIGH' region motif. The 'KMSKS' region signature appears at 557-561 (KMSKS). Lys560 is an ATP binding site. The stretch at 866–932 (LIDIASLRSR…RLVKERLMGL (67 aa)) forms a coiled coil.

This sequence belongs to the class-I aminoacyl-tRNA synthetase family. ValS type 1 subfamily. As to quaternary structure, monomer.

It is found in the cytoplasm. It catalyses the reaction tRNA(Val) + L-valine + ATP = L-valyl-tRNA(Val) + AMP + diphosphate. Its function is as follows. Catalyzes the attachment of valine to tRNA(Val). As ValRS can inadvertently accommodate and process structurally similar amino acids such as threonine, to avoid such errors, it has a 'posttransfer' editing activity that hydrolyzes mischarged Thr-tRNA(Val) in a tRNA-dependent manner. The polypeptide is Valine--tRNA ligase (Prochlorococcus marinus (strain NATL2A)).